Here is a 398-residue protein sequence, read N- to C-terminus: Isochorismate synthase DhbC (398 aa).

Ser271 carries the post-translational modification Phosphoserine.

Belongs to the isochorismate synthase family.

It carries out the reaction chorismate = isochorismate. Its pathway is siderophore biosynthesis; bacillibactin biosynthesis. The chain is Isochorismate synthase DhbC (dhbC) from Bacillus subtilis (strain 168).